The primary structure comprises 105 residues: Large ribosomal subunit protein uL24 (105 aa).

The protein belongs to the universal ribosomal protein uL24 family. As to quaternary structure, part of the 50S ribosomal subunit.

One of two assembly initiator proteins, it binds directly to the 5'-end of the 23S rRNA, where it nucleates assembly of the 50S subunit. Its function is as follows. One of the proteins that surrounds the polypeptide exit tunnel on the outside of the subunit. The protein is Large ribosomal subunit protein uL24 of Xanthomonas campestris pv. campestris (strain 8004).